Consider the following 293-residue polypeptide: Protease HtpX homolog (293 aa).

2 helical membrane passes run 5-25 (IFLF…TLRL) and 43-63 (ALLV…LAMS). Histidine 148 contributes to the Zn(2+) binding site. Residue glutamate 149 is part of the active site. Residue histidine 152 participates in Zn(2+) binding. The next 2 membrane-spanning stretches (helical) occupy residues 159–179 (VTLA…SRII) and 199–219 (FVTS…IVMW). Glutamate 225 contributes to the Zn(2+) binding site.

It belongs to the peptidase M48B family. It depends on Zn(2+) as a cofactor.

The protein resides in the cell inner membrane. The polypeptide is Protease HtpX homolog (Nitrosomonas europaea (strain ATCC 19718 / CIP 103999 / KCTC 2705 / NBRC 14298)).